The primary structure comprises 507 residues: Ribose import ATP-binding protein RbsA (507 aa).

2 ABC transporter domains span residues 7-242 (LEMR…VGRP) and 253-497 (IPLG…TGVT). ATP is bound at residue 39–46 (GENGAGKS).

Belongs to the ABC transporter superfamily. Ribose importer (TC 3.A.1.2.1) family. In terms of assembly, the complex is composed of an ATP-binding protein (RbsA), two transmembrane proteins (RbsC) and a solute-binding protein (RbsB).

The protein resides in the cell inner membrane. The catalysed reaction is D-ribose(out) + ATP + H2O = D-ribose(in) + ADP + phosphate + H(+). Part of the ABC transporter complex RbsABC involved in ribose import. Responsible for energy coupling to the transport system. In Yersinia pestis bv. Antiqua (strain Antiqua), this protein is Ribose import ATP-binding protein RbsA.